We begin with the raw amino-acid sequence, 174 residues long: Gamma-crystallin C (174 aa).

2 Beta/gamma crystallin 'Greek key' domains span residues 2 to 40 (GKITFYEDRGFQGRCYQCSSDCPNLQPYFSRCNSIRVDS) and 41 to 83 (GCWM…CLIS). C23 carries the post-translational modification S-methylcysteine. Residues 84–87 (DTSS) are connecting peptide. 2 consecutive Beta/gamma crystallin 'Greek key' domains span residues 88–128 (HRLR…HVLE) and 129–171 (GCWV…RRVV).

It belongs to the beta/gamma-crystallin family.

Crystallins are the dominant structural components of the vertebrate eye lens. The sequence is that of Gamma-crystallin C (CRYGC) from Bos taurus (Bovine).